A 240-amino-acid polypeptide reads, in one-letter code: UDP-2,3-diacylglucosamine hydrolase (240 aa).

5 residues coordinate Mn(2+): aspartate 8, histidine 10, aspartate 41, asparagine 79, and histidine 114. Position 79-80 (asparagine 79–arginine 80) interacts with substrate. Substrate contacts are provided by aspartate 122, serine 160, asparagine 164, lysine 167, and histidine 195. The Mn(2+) site is built by histidine 195 and histidine 197.

It belongs to the LpxH family. Requires Mn(2+) as cofactor.

It localises to the cell inner membrane. It is found in the cytoplasm. It carries out the reaction UDP-2-N,3-O-bis[(3R)-3-hydroxytetradecanoyl]-alpha-D-glucosamine + H2O = 2-N,3-O-bis[(3R)-3-hydroxytetradecanoyl]-alpha-D-glucosaminyl 1-phosphate + UMP + 2 H(+). Its pathway is glycolipid biosynthesis; lipid IV(A) biosynthesis; lipid IV(A) from (3R)-3-hydroxytetradecanoyl-[acyl-carrier-protein] and UDP-N-acetyl-alpha-D-glucosamine: step 4/6. Its activity is regulated as follows. Inhibited by a sulfonyl piperazine compound that shows antibacterial activity against E.coli; LpxH is the cellular target of this compound. Inhibited by 0.01% (or more) Triton X-100 in vitro. Its function is as follows. Hydrolyzes the pyrophosphate bond of UDP-2,3-diacylglucosamine to yield 2,3-diacylglucosamine 1-phosphate (lipid X) and UMP by catalyzing the attack of water at the alpha-P atom. Involved in the biosynthesis of lipid A, a phosphorylated glycolipid that anchors the lipopolysaccharide to the outer membrane of the cell. Is essential for E.coli growth. Does not cleave the unacylated UDP-GlcNAc, the mono-acylated UDP-3-O-(R)-3-hydroxymyristoyl-GlcNAc, and CDP-diacylglycerol. This Escherichia coli (strain K12) protein is UDP-2,3-diacylglucosamine hydrolase.